The chain runs to 559 residues: DNA primase (559 aa).

The segment at 37–61 (CPFHEERSASFSVNQVKGFYYCFGC) adopts a CHC2-type zinc-finger fold. Residues 246-327 (KQVIVTEGYL…KGGVILFENN (82 aa)) form the Toprim domain. Residues Glu-252, Asp-296, and Asp-298 each contribute to the Mg(2+) site.

Belongs to the DnaG primase family. Monomer. Interacts with DnaB. Requires Zn(2+) as cofactor. Mg(2+) serves as cofactor.

It carries out the reaction ssDNA + n NTP = ssDNA/pppN(pN)n-1 hybrid + (n-1) diphosphate.. In terms of biological role, RNA polymerase that catalyzes the synthesis of short RNA molecules used as primers for DNA polymerase during DNA replication. The polypeptide is DNA primase (Helicobacter pylori (strain J99 / ATCC 700824) (Campylobacter pylori J99)).